The following is a 260-amino-acid chain: Snake venom serine protease homolog 2A (260 aa).

The signal sequence occupies residues 1-18 (MVLIRVLANLLILQLSYA). Residues 19–24 (QKSSEL) constitute a propeptide that is removed on maturation. The Peptidase S1 domain maps to 25–251 (IIGGDECNIN…HLDWIKSIIA (227 aa)). 6 disulfides stabilise this stretch: Cys31–Cys165, Cys52–Cys68, Cys100–Cys258, Cys144–Cys212, Cys176–Cys191, and Cys202–Cys227. N-linked (GlcNAc...) asparagine glycans are attached at residues Asn83, Asn123, and Asn124.

This sequence belongs to the peptidase S1 family. Snake venom subfamily. In terms of tissue distribution, expressed by the venom gland.

The protein resides in the secreted. Its function is as follows. Snake venom serine protease homolog that may act in the hemostasis system of the prey. This Craspedocephalus gramineus (Bamboo pit viper) protein is Snake venom serine protease homolog 2A (TLG2A).